The sequence spans 644 residues: DNA mismatch repair protein MutL (644 aa).

2 disordered regions span residues 353–399 (SESG…SQLT) and 420–440 (GSMAVPRESRSGPTGESRARA). The segment covering 370–381 (SPESKTHSTWNE) has biased composition (polar residues). Over residues 383 to 399 (SRVDTSRVEISRDSQLT) the composition is skewed to basic and acidic residues.

This sequence belongs to the DNA mismatch repair MutL/HexB family.

In terms of biological role, this protein is involved in the repair of mismatches in DNA. It is required for dam-dependent methyl-directed DNA mismatch repair. May act as a 'molecular matchmaker', a protein that promotes the formation of a stable complex between two or more DNA-binding proteins in an ATP-dependent manner without itself being part of a final effector complex. The chain is DNA mismatch repair protein MutL from Shewanella sp. (strain MR-4).